Here is a 127-residue protein sequence, read N- to C-terminus: Mediator of RNA polymerase II transcription subunit 9 (127 aa).

Residues 95–119 are a coiled coil; the sequence is QKEQEIEAKKRVHRQLRQRVEEIAG.

It belongs to the Mediator complex subunit 9 family. Component of the Mediator complex.

It is found in the nucleus. Component of the Mediator complex, a coactivator involved in the regulated transcription of nearly all RNA polymerase II-dependent genes. Mediator functions as a bridge to convey information from gene-specific regulatory proteins to the basal RNA polymerase II transcription machinery. Mediator is recruited to promoters by direct interactions with regulatory proteins and serves as a scaffold for the assembly of a functional preinitiation complex with RNA polymerase II and the general transcription factors. This Eremothecium gossypii (strain ATCC 10895 / CBS 109.51 / FGSC 9923 / NRRL Y-1056) (Yeast) protein is Mediator of RNA polymerase II transcription subunit 9 (CSE2).